We begin with the raw amino-acid sequence, 153 residues long: Small ribosomal subunit protein uS13 (153 aa).

A disordered region spans residues 132-153 (VRGQRTRSHHRKGRTVGVIKKK). Positions 135–153 (QRTRSHHRKGRTVGVIKKK) are enriched in basic residues.

It belongs to the universal ribosomal protein uS13 family. Part of the 30S ribosomal subunit. Forms a loose heterodimer with protein S19. Forms two bridges to the 50S subunit in the 70S ribosome.

Its function is as follows. Located at the top of the head of the 30S subunit, it contacts several helices of the 16S rRNA. In the 70S ribosome it contacts the 23S rRNA (bridge B1a) and protein L5 of the 50S subunit (bridge B1b), connecting the 2 subunits; these bridges are implicated in subunit movement. This Nanoarchaeum equitans (strain Kin4-M) protein is Small ribosomal subunit protein uS13.